The primary structure comprises 161 residues: Allophycocyanin alpha-B chain (161 aa).

Position 71 is an N4-methylasparagine (N71). C81 is a binding site for (2R,3E)-phycocyanobilin.

Belongs to the phycobiliprotein family. Contains one covalently linked bilin chromophore.

The protein resides in the plastid. Its subcellular location is the chloroplast thylakoid membrane. In terms of biological role, allophycocyanin is a photosynthetic bile pigment-protein complex with maximum absorption at approximately 650 nanometers. The chain is Allophycocyanin alpha-B chain (apcD) from Porphyra purpurea (Red seaweed).